We begin with the raw amino-acid sequence, 242 residues long: Probable transcriptional regulatory protein Bxeno_A1185 (242 aa).

It belongs to the TACO1 family.

Its subcellular location is the cytoplasm. This is Probable transcriptional regulatory protein Bxeno_A1185 from Paraburkholderia xenovorans (strain LB400).